We begin with the raw amino-acid sequence, 287 residues long: Taxis protein CheF2 (287 aa).

In terms of assembly, interacts with chemotaxis (Che) proteins as well as flagella accessory (Fla) proteins.

Its function is as follows. Involved in taxis signal transduction. The polypeptide is Taxis protein CheF2 (cheF2) (Halobacterium salinarum (strain ATCC 29341 / DSM 671 / R1)).